The sequence spans 123 residues: Ragulator complex protein LAMTOR3-A (123 aa).

It belongs to the LAMTOR3 family. Part of the Ragulator complex composed of lamtor1, lamtor2, lamtor3, lamtor4 and lamtor5. The Ragulator complex interacts with slc38a9; the probable amino acid sensor. Component of the lysosomal folliculin complex (LFC).

The protein localises to the late endosome membrane. As part of the Ragulator complex it is involved in amino acid sensing and activation of mTORC1, a signaling complex promoting cell growth in response to growth factors, energy levels, and amino acids. Activated by amino acids through a mechanism involving the lysosomal V-ATPase, the Ragulator plays a dual role for the small GTPases Rag (RagA/RRAGA, RagB/RRAGB, RagC/RRAGC and/or RagD/RRAGD): it (1) acts as a guanine nucleotide exchange factor (GEF), activating the small GTPases Rag and (2) mediates recruitment of Rag GTPases to the lysosome membrane. Activated Ragulator and Rag GTPases function as a scaffold recruiting mTORC1 to lysosomes where it is in turn activated. This is Ragulator complex protein LAMTOR3-A (lamtor3-a) from Xenopus laevis (African clawed frog).